Reading from the N-terminus, the 270-residue chain is Urease accessory protein UreD (270 aa).

This sequence belongs to the UreD family. In terms of assembly, ureD, UreF and UreG form a complex that acts as a GTP-hydrolysis-dependent molecular chaperone, activating the urease apoprotein by helping to assemble the nickel containing metallocenter of UreC. The complex may form in the order UreABCD, UreABCDF, UreABCDFG. The UreE protein probably delivers the nickel in a GTPase-dependent fashion.

The protein localises to the cytoplasm. Functionally, necessary for the functional incorporation of the urease nickel metallocenter. This is Urease accessory protein UreD from Klebsiella aerogenes (Enterobacter aerogenes).